The sequence spans 279 residues: Bifunctional protein FolD (279 aa).

Residues 159-161 (GRS), Ser-184, and Thr-225 contribute to the NADP(+) site.

The protein belongs to the tetrahydrofolate dehydrogenase/cyclohydrolase family. In terms of assembly, homodimer.

The enzyme catalyses (6R)-5,10-methylene-5,6,7,8-tetrahydrofolate + NADP(+) = (6R)-5,10-methenyltetrahydrofolate + NADPH. It catalyses the reaction (6R)-5,10-methenyltetrahydrofolate + H2O = (6R)-10-formyltetrahydrofolate + H(+). Its pathway is one-carbon metabolism; tetrahydrofolate interconversion. Catalyzes the oxidation of 5,10-methylenetetrahydrofolate to 5,10-methenyltetrahydrofolate and then the hydrolysis of 5,10-methenyltetrahydrofolate to 10-formyltetrahydrofolate. The polypeptide is Bifunctional protein FolD (Methanospirillum hungatei JF-1 (strain ATCC 27890 / DSM 864 / NBRC 100397 / JF-1)).